Consider the following 434-residue polypeptide: Nicotinate phosphoribosyltransferase (434 aa).

His242 carries the phosphohistidine; by autocatalysis modification.

This sequence belongs to the NAPRTase family. Post-translationally, transiently phosphorylated on a His residue during the reaction cycle. Phosphorylation strongly increases the affinity for substrates and increases the rate of nicotinate D-ribonucleotide production. Dephosphorylation regenerates the low-affinity form of the enzyme, leading to product release.

The catalysed reaction is nicotinate + 5-phospho-alpha-D-ribose 1-diphosphate + ATP + H2O = nicotinate beta-D-ribonucleotide + ADP + phosphate + diphosphate. It functions in the pathway cofactor biosynthesis; NAD(+) biosynthesis; nicotinate D-ribonucleotide from nicotinate: step 1/1. Catalyzes the synthesis of beta-nicotinate D-ribonucleotide from nicotinate and 5-phospho-D-ribose 1-phosphate at the expense of ATP. The chain is Nicotinate phosphoribosyltransferase from Rhizobium etli (strain ATCC 51251 / DSM 11541 / JCM 21823 / NBRC 15573 / CFN 42).